The following is a 373-amino-acid chain: Dual-specificity RNA methyltransferase RlmN (373 aa).

E94 (proton acceptor) is an active-site residue. A Radical SAM core domain is found at 100 to 339; that stretch reads EDDRATLCVS…VIVRKTRGDD (240 aa). C107 and C344 are joined by a disulfide. Positions 114, 118, and 121 each coordinate [4Fe-4S] cluster. Residues 168–169, S200, 222–224, and N301 each bind S-adenosyl-L-methionine; these read GE and SIH. C344 functions as the S-methylcysteine intermediate in the catalytic mechanism.

The protein belongs to the radical SAM superfamily. RlmN family. [4Fe-4S] cluster is required as a cofactor.

The protein localises to the cytoplasm. The catalysed reaction is adenosine(2503) in 23S rRNA + 2 reduced [2Fe-2S]-[ferredoxin] + 2 S-adenosyl-L-methionine = 2-methyladenosine(2503) in 23S rRNA + 5'-deoxyadenosine + L-methionine + 2 oxidized [2Fe-2S]-[ferredoxin] + S-adenosyl-L-homocysteine. It catalyses the reaction adenosine(37) in tRNA + 2 reduced [2Fe-2S]-[ferredoxin] + 2 S-adenosyl-L-methionine = 2-methyladenosine(37) in tRNA + 5'-deoxyadenosine + L-methionine + 2 oxidized [2Fe-2S]-[ferredoxin] + S-adenosyl-L-homocysteine. Functionally, specifically methylates position 2 of adenine 2503 in 23S rRNA and position 2 of adenine 37 in tRNAs. m2A2503 modification seems to play a crucial role in the proofreading step occurring at the peptidyl transferase center and thus would serve to optimize ribosomal fidelity. This is Dual-specificity RNA methyltransferase RlmN from Shewanella oneidensis (strain ATCC 700550 / JCM 31522 / CIP 106686 / LMG 19005 / NCIMB 14063 / MR-1).